Reading from the N-terminus, the 209-residue chain is Large ribosomal subunit protein uL3 (209 aa).

The residue at position 150 (glutamine 150) is an N5-methylglutamine.

It belongs to the universal ribosomal protein uL3 family. Part of the 50S ribosomal subunit. Forms a cluster with proteins L14 and L19. Methylated by PrmB.

Its function is as follows. One of the primary rRNA binding proteins, it binds directly near the 3'-end of the 23S rRNA, where it nucleates assembly of the 50S subunit. The protein is Large ribosomal subunit protein uL3 of Aliivibrio fischeri (strain MJ11) (Vibrio fischeri).